Here is a 265-residue protein sequence, read N- to C-terminus: Iron(3+)-hydroxamate import ATP-binding protein FhuC (265 aa).

The 237-residue stretch at 12–248 (FALRNISFRV…ETLEMIYGIP (237 aa)) folds into the ABC transporter domain. ATP-binding positions include 44 to 51 (GHNGSGKS) and 168 to 179 (CLLLDEPTSALD).

Belongs to the ABC transporter superfamily. Iron (Fe3+)-hydroxamate importer (TC 3.A.1.14.7) family. As to quaternary structure, the complex is composed of two ATP-binding proteins (FhuC), a transmembrane protein (FhuB) and a solute-binding protein (FhuD). FhuC interacts with FhuB.

Its subcellular location is the cell inner membrane. It carries out the reaction ATP + H2O + Fe(3+)-hydroxamate complex-[hydroxamate-binding protein]Side 1 = ADP + phosphate + Fe(3+)-hydroxamate complexSide 2 + [hydroxamate-binding protein]Side 1.. With respect to regulation, ATPase activity is inhibited by vanadate. Its function is as follows. Part of the ABC transporter complex FhuCDB involved in iron(3+)-hydroxamate import. Responsible for energy coupling to the transport system. The polypeptide is Iron(3+)-hydroxamate import ATP-binding protein FhuC (fhuC) (Escherichia coli (strain K12)).